The primary structure comprises 368 residues: Phospho-N-acetylmuramoyl-pentapeptide-transferase (368 aa).

The next 9 helical transmembrane spans lie at 2–22 (IALI…TPLL), 51–71 (TLGG…SALY), 80–100 (PSWS…LGFI), 117–137 (GGKF…ALLI), 167–187 (VAII…TNAV), 193–213 (LDGL…IIAF), 234–254 (PLDL…FLWY), 271–291 (LGGL…AVVL), and 340–360 (FWMI…GDWV).

It belongs to the glycosyltransferase 4 family. MraY subfamily. Mg(2+) serves as cofactor.

It localises to the cell membrane. It catalyses the reaction UDP-N-acetyl-alpha-D-muramoyl-L-alanyl-gamma-D-glutamyl-meso-2,6-diaminopimeloyl-D-alanyl-D-alanine + di-trans,octa-cis-undecaprenyl phosphate = di-trans,octa-cis-undecaprenyl diphospho-N-acetyl-alpha-D-muramoyl-L-alanyl-D-glutamyl-meso-2,6-diaminopimeloyl-D-alanyl-D-alanine + UMP. It participates in cell wall biogenesis; peptidoglycan biosynthesis. Functionally, catalyzes the initial step of the lipid cycle reactions in the biosynthesis of the cell wall peptidoglycan: transfers peptidoglycan precursor phospho-MurNAc-pentapeptide from UDP-MurNAc-pentapeptide onto the lipid carrier undecaprenyl phosphate, yielding undecaprenyl-pyrophosphoryl-MurNAc-pentapeptide, known as lipid I. This Bifidobacterium longum (strain DJO10A) protein is Phospho-N-acetylmuramoyl-pentapeptide-transferase.